The primary structure comprises 725 residues: Endoglucanase G (725 aa).

The first 35 residues, 1-35 (MLKTKRKLTKAIGVALSISILSSLVSFIPQTNTYA), serve as a signal peptide directing secretion. The active-site Nucleophile is the aspartate 93. Residues histidine 408, aspartate 446, and glutamate 455 contribute to the active site. A CBM3 domain is found at 489-650 (ITNDEVIIKA…GVKVFGNEPA (162 aa)). A Dockerin domain is found at 658–724 (PEILYGDVNS…LLGTITQLPQ (67 aa)).

It belongs to the glycosyl hydrolase 9 (cellulase E) family.

It carries out the reaction Endohydrolysis of (1-&gt;4)-beta-D-glucosidic linkages in cellulose, lichenin and cereal beta-D-glucans.. The protein operates within glycan metabolism; cellulose degradation. In terms of biological role, the biological conversion of cellulose to glucose generally requires three types of hydrolytic enzymes: (1) Endoglucanases which cut internal beta-1,4-glucosidic bonds; (2) Exocellobiohydrolases that cut the disaccharide cellobiose from the non-reducing end of the cellulose polymer chain; (3) Beta-1,4-glucosidases which hydrolyze the cellobiose and other short cello-oligosaccharides to glucose. This Ruminiclostridium cellulolyticum (strain ATCC 35319 / DSM 5812 / JCM 6584 / H10) (Clostridium cellulolyticum) protein is Endoglucanase G (celCCG).